Consider the following 371-residue polypeptide: RNA-binding protein 48 (371 aa).

The 79-residue stretch at 46 to 124 (QYLLIQGVPA…GLLHVCYAPE (79 aa)) folds into the RRM domain. Disordered stretches follow at residues 220–249 (EHTD…AFPP) and 343–371 (EVTS…RRRI).

This sequence belongs to the RBM48 family. In terms of assembly, component of the minor spliceosome. Within this complex, interacts with ARMC7 and PRPF8/PRP8.

Functionally, as a component of the minor spliceosome, involved in the splicing of U12-type introns in pre-mRNAs. The sequence is that of RNA-binding protein 48 (Rbm48) from Rattus norvegicus (Rat).